The primary structure comprises 126 residues: Small ribosomal subunit protein uS12 (126 aa).

Asp-89 carries the 3-methylthioaspartic acid modification. The disordered stretch occupies residues 106 to 126 (GVRERRRSRSKYGAKMPRSAA).

This sequence belongs to the universal ribosomal protein uS12 family. In terms of assembly, part of the 30S ribosomal subunit. Contacts proteins S8 and S17. May interact with IF1 in the 30S initiation complex.

With S4 and S5 plays an important role in translational accuracy. In terms of biological role, interacts with and stabilizes bases of the 16S rRNA that are involved in tRNA selection in the A site and with the mRNA backbone. Located at the interface of the 30S and 50S subunits, it traverses the body of the 30S subunit contacting proteins on the other side and probably holding the rRNA structure together. The combined cluster of proteins S8, S12 and S17 appears to hold together the shoulder and platform of the 30S subunit. In Tremblaya princeps, this protein is Small ribosomal subunit protein uS12.